A 111-amino-acid chain; its full sequence is Probable U2 small nuclear ribonucleoprotein B'' (111 aa).

The 80-residue stretch at asparagine 4–serine 83 folds into the RRM domain.

As to quaternary structure, belongs to the 40S cdc5-associated complex (or cwf complex), a spliceosome sub-complex reminiscent of a late-stage spliceosome composed of the U2, U5 and U6 snRNAs and at least brr2, cdc5, cwf2/prp3, cwf3/syf1, cwf4/syf3, cwf5/ecm2, spp42/cwf6, cwf7/spf27, cwf8, cwf9, cwf10, cwf11, cwf12, prp45/cwf13, cwf14, cwf15, cwf16, cwf17, cwf18, cwf19, cwf20, cwf21, cwf22, cwf23, cwf24, cwf25, cwf26, cyp7/cwf27, cwf28, cwf29/ist3, lea1, msl1, prp5/cwf1, prp10, prp12/sap130, prp17, prp22, sap61, sap62, sap114, sap145, slu7, smb1, smd1, smd3, smf1, smg1 and syf2.

The protein localises to the nucleus. Functionally, involved in pre-mRNA splicing. This protein is associated with snRNP U2. It binds stem loop IV of U2 snRNA. The protein is Probable U2 small nuclear ribonucleoprotein B'' (msl1) of Schizosaccharomyces pombe (strain 972 / ATCC 24843) (Fission yeast).